The sequence spans 295 residues: Accessory protein VasW (295 aa).

Functionally, plays an accessory role in VasX-mediated bacterial killing. The polypeptide is Accessory protein VasW (Vibrio cholerae serotype O1 (strain ATCC 39315 / El Tor Inaba N16961)).